A 443-amino-acid polypeptide reads, in one-letter code: UDP-N-acetylmuramate--L-alanine ligase (443 aa).

Position 111 to 117 (111 to 117 (GAHGKTS)) interacts with ATP.

This sequence belongs to the MurCDEF family.

The protein localises to the cytoplasm. It carries out the reaction UDP-N-acetyl-alpha-D-muramate + L-alanine + ATP = UDP-N-acetyl-alpha-D-muramoyl-L-alanine + ADP + phosphate + H(+). It functions in the pathway cell wall biogenesis; peptidoglycan biosynthesis. Functionally, cell wall formation. This chain is UDP-N-acetylmuramate--L-alanine ligase, found in Levilactobacillus brevis (strain ATCC 367 / BCRC 12310 / CIP 105137 / JCM 1170 / LMG 11437 / NCIMB 947 / NCTC 947) (Lactobacillus brevis).